Consider the following 81-residue polypeptide: Costars family protein ABRACL (81 aa).

The protein belongs to the costars family.

This is Costars family protein ABRACL from Coturnix coturnix (Common quail).